A 410-amino-acid polypeptide reads, in one-letter code: Dipeptidase 1 (410 aa).

An N-terminal signal peptide occupies residues 1 to 16 (MWTGWWLWPLVAVCTA). Positions 36 and 38 each coordinate Zn(2+). Residues N57 and N62 are each glycosylated (N-linked (GlcNAc...) asparagine). C87 and C170 are oxidised to a cystine. E141 is a Zn(2+) binding site. Substrate is bound at residue H168. H214 and H235 together coordinate Zn(2+). A disulfide bridge links C242 with C274. Residue R246 coordinates substrate. N-linked (GlcNAc...) asparagine glycosylation occurs at N279. Residue D304 coordinates substrate. Residue S384 is the site of GPI-anchor amidated serine attachment. Residues 385-410 (GAPSLHLQPGTLLASLVTLLLSLCLL) constitute a propeptide, removed in mature form.

Belongs to the metallo-dependent hydrolases superfamily. Peptidase M19 family. In terms of assembly, homodimer; disulfide-linked. Zn(2+) serves as cofactor.

The protein resides in the apical cell membrane. It carries out the reaction an L-aminoacyl-L-amino acid + H2O = 2 an L-alpha-amino acid. The enzyme catalyses leukotriene D4 + H2O = leukotriene E4 + glycine. It catalyses the reaction L-cystine-bis-glycine + 2 H2O = L-cystine + 2 glycine. The catalysed reaction is a beta-lactam + H2O = a substituted beta-amino acid. It carries out the reaction glycyldehydrophenylalanine + H2O = 2,3-didehydrophenylalanine + glycine. With respect to regulation, inhibited by L-penicillamine. Inhibited by cilastatin. Its function is as follows. Hydrolyzes a wide range of dipeptides including the conversion of leukotriene D4 to leukotriene E4. Hydrolyzes cystinyl-bis-glycine (cys-bis-gly) formed during glutathione degradation. Also possesses beta lactamase activity and hydrolytically inactivates beta-lactam antibiotics. In terms of biological role, independently of its dipeptidase activity, acts as an adhesion receptor for neutrophil recruitment from bloodstream into inflamed lungs and liver. The protein is Dipeptidase 1 (DPEP1) of Bos taurus (Bovine).